The sequence spans 578 residues: Arginine--tRNA ligase (578 aa).

Residues 127–137 carry the 'HIGH' region motif; the sequence is PNLAKEMHVGH.

The protein belongs to the class-I aminoacyl-tRNA synthetase family. In terms of assembly, monomer.

It localises to the cytoplasm. It carries out the reaction tRNA(Arg) + L-arginine + ATP = L-arginyl-tRNA(Arg) + AMP + diphosphate. This Pseudomonas fluorescens (strain Pf0-1) protein is Arginine--tRNA ligase.